The chain runs to 411 residues: RING-H2 finger protein ATL65 (411 aa).

Residues 1–32 form a disordered region; sequence MRFVAPPPRSGDNSPSPSPSSGISEEILSRSS. The span at 10-21 shows a compositional bias: low complexity; the sequence is SGDNSPSPSPSS. A helical membrane pass occupies residues 36-56; it reads LEFSPPLIAMVVVLAAAFLFV. The RING-type; atypical zinc-finger motif lies at 156–198; it reads CAVCLLEFEEGDYVRTLPLCFHAFHLECIDEWLRSHPNCPLCR.

Belongs to the RING-type zinc finger family. ATL subfamily.

The protein resides in the membrane. The catalysed reaction is S-ubiquitinyl-[E2 ubiquitin-conjugating enzyme]-L-cysteine + [acceptor protein]-L-lysine = [E2 ubiquitin-conjugating enzyme]-L-cysteine + N(6)-ubiquitinyl-[acceptor protein]-L-lysine.. It functions in the pathway protein modification; protein ubiquitination. The chain is RING-H2 finger protein ATL65 (ATL65) from Arabidopsis thaliana (Mouse-ear cress).